Consider the following 457-residue polypeptide: Bifunctional protein GlmU (457 aa).

The segment at 1–229 (MSNSAKSVVI…LSEMEGVNNR (229 aa)) is pyrophosphorylase. UDP-N-acetyl-alpha-D-glucosamine contacts are provided by residues 11 to 14 (LAAG), Lys25, Gln76, 81 to 82 (GT), 103 to 105 (YGD), Gly140, Glu154, Asn169, and Asn227. Asp105 lines the Mg(2+) pocket. Asn227 lines the Mg(2+) pocket. The segment at 230–250 (LQLSALERIYQSEQAEQLLLA) is linker. Positions 251 to 457 (GVMLLDPARF…GWKRPVKEKK (207 aa)) are N-acetyltransferase. 2 residues coordinate UDP-N-acetyl-alpha-D-glucosamine: Arg333 and Lys351. The active-site Proton acceptor is the His363. UDP-N-acetyl-alpha-D-glucosamine contacts are provided by Tyr366 and Asn377. Acetyl-CoA is bound by residues Ala380, 386–387 (NY), Ser405, Ala423, and Arg440.

This sequence in the N-terminal section; belongs to the N-acetylglucosamine-1-phosphate uridyltransferase family. The protein in the C-terminal section; belongs to the transferase hexapeptide repeat family. In terms of assembly, homotrimer. The cofactor is Mg(2+).

It is found in the cytoplasm. It catalyses the reaction alpha-D-glucosamine 1-phosphate + acetyl-CoA = N-acetyl-alpha-D-glucosamine 1-phosphate + CoA + H(+). The catalysed reaction is N-acetyl-alpha-D-glucosamine 1-phosphate + UTP + H(+) = UDP-N-acetyl-alpha-D-glucosamine + diphosphate. It functions in the pathway nucleotide-sugar biosynthesis; UDP-N-acetyl-alpha-D-glucosamine biosynthesis; N-acetyl-alpha-D-glucosamine 1-phosphate from alpha-D-glucosamine 6-phosphate (route II): step 2/2. Its pathway is nucleotide-sugar biosynthesis; UDP-N-acetyl-alpha-D-glucosamine biosynthesis; UDP-N-acetyl-alpha-D-glucosamine from N-acetyl-alpha-D-glucosamine 1-phosphate: step 1/1. The protein operates within bacterial outer membrane biogenesis; LPS lipid A biosynthesis. In terms of biological role, catalyzes the last two sequential reactions in the de novo biosynthetic pathway for UDP-N-acetylglucosamine (UDP-GlcNAc). The C-terminal domain catalyzes the transfer of acetyl group from acetyl coenzyme A to glucosamine-1-phosphate (GlcN-1-P) to produce N-acetylglucosamine-1-phosphate (GlcNAc-1-P), which is converted into UDP-GlcNAc by the transfer of uridine 5-monophosphate (from uridine 5-triphosphate), a reaction catalyzed by the N-terminal domain. In Photorhabdus laumondii subsp. laumondii (strain DSM 15139 / CIP 105565 / TT01) (Photorhabdus luminescens subsp. laumondii), this protein is Bifunctional protein GlmU.